Reading from the N-terminus, the 86-residue chain is MKPDIHPVYRTVVFHDTSANEYVKVGSTIKTEREIELGGVTYPYVTIDVSSKSHPFYTGRQKTFDSESSAARFQKRFGHFIGAKRG.

The protein belongs to the bacterial ribosomal protein bL31 family. Type B subfamily. Part of the 50S ribosomal subunit.

This Salmonella paratyphi A (strain ATCC 9150 / SARB42) protein is Large ribosomal subunit protein bL31B.